Consider the following 222-residue polypeptide: UPF0128 protein TK2294 (222 aa).

The protein belongs to the UPF0128 family.

The sequence is that of UPF0128 protein TK2294 from Thermococcus kodakarensis (strain ATCC BAA-918 / JCM 12380 / KOD1) (Pyrococcus kodakaraensis (strain KOD1)).